The following is a 2559-amino-acid chain: Ubiquitin carboxyl-terminal hydrolase 9X (2559 aa).

Residues 1–44 (MTATTRGSPVGGNDNQGQAPDGQSQPPLQQNQTSSPDSSNENSP) are compositionally biased toward polar residues. Residues 1–64 (MTATTRGSPV…DAPPQIEDEE (64 aa)) form a disordered region. A phosphoserine mark is found at Ser-374, Ser-375, and Ser-588. The segment at 967-999 (QISSNMPSSPDSSSDSSTGSPGNHGNHYSDGPN) is disordered. Over residues 969–989 (SSNMPSSPDSSSDSSTGSPGN) the composition is skewed to low complexity. The region spanning 1557–1956 (VGLKNAGATC…NAYILFYERM (400 aa)) is the USP domain. The active-site Nucleophile is Cys-1566. Residues 1592–1633 (GSDVDDDMSGDEKQDNESNVDPRDDVFGYPQQFEDKPPLSKT) form a disordered region. At Ser-1600 the chain carries Phosphoserine. Composition is skewed to basic and acidic residues over residues 1601-1617 (GDEK…RDDV) and 1624-1633 (FEDKPPLSKT). Zn(2+) contacts are provided by Cys-1727, His-1729, Cys-1771, and Cys-1774. His-1879 serves as the catalytic Proton acceptor. A Phosphoserine modification is found at Ser-2443. Positions 2475 to 2484 (PEEEPDDQDA) are enriched in acidic residues. Positions 2475–2559 (PEEEPDDQDA…QTKGSVKCTY (85 aa)) are disordered. Composition is skewed to polar residues over residues 2503–2513 (PGSQYQQNNHV) and 2527–2537 (NNPQRTGQRAQ). Phosphotyrosine is present on Tyr-2540. Ser-2547 carries the post-translational modification Phosphoserine. Thr-2551 bears the Phosphothreonine mark.

This sequence belongs to the peptidase C19 family. As to quaternary structure, interacts with SMAD4, MARK4, NUAK1 and BIRC5/survivin. Interacts with DCX. Interacts with OTUD4 and USP7; the interaction is direct. As to expression, highest levels in liver and brain with expression also detected in heart, muscle, spleen and kidney (at protein leve). Ubiquitously expressed in adult tissues.

The protein localises to the cytoplasm. It localises to the cytosol. It is found in the cell projection. The protein resides in the growth cone. Its subcellular location is the cytoskeleton. The protein localises to the cilium axoneme. It catalyses the reaction Thiol-dependent hydrolysis of ester, thioester, amide, peptide and isopeptide bonds formed by the C-terminal Gly of ubiquitin (a 76-residue protein attached to proteins as an intracellular targeting signal).. In terms of biological role, deubiquitinase involved both in the processing of ubiquitin precursors and of ubiquitinated proteins. May therefore play an important regulatory role at the level of protein turnover by preventing degradation of proteins through the removal of conjugated ubiquitin. Specifically hydrolyzes 'Lys-11'-, followed by 'Lys-63'-, 'Lys-48'- and 'Lys-6'-linked polyubiquitins chains. Essential component of TGF-beta/BMP signaling cascade. Specifically deubiquitinates monoubiquitinated SMAD4, opposing the activity of E3 ubiquitin-protein ligase TRIM33. Deubiquitinates alkylation repair enzyme ALKBH3. OTUD4 recruits USP7 and USP9X to stabilize ALKBH3, thereby promoting the repair of alkylated DNA lesions. Deubiquitinates RNA demethylase enzyme ALKBH5, promoting its stability. Deubiquitinates mTORC2 complex component RICTOR at 'Lys-294' by removing 'Lys-63'-linked polyubiquitin chains, stabilizing RICTOR and enhancing its binding to MTOR, thus promoting mTORC2 complex assembly. Regulates chromosome alignment and segregation in mitosis by regulating the localization of BIRC5/survivin to mitotic centromeres. Involved in axonal growth and neuronal cell migration. Regulates cellular clock function by enhancing the protein stability and transcriptional activity of the core circadian protein BMAL1 via its deubiquitinating activity. Acts as a regulator of peroxisome import by mediating deubiquitination of PEX5: specifically deubiquitinates PEX5 monoubiquitinated at 'Cys-11' following its retrotranslocation into the cytosol, resetting PEX5 for a subsequent import cycle. Deubiquitinates PEG10. Inhibits the activation of the Hippo signaling pathway via deubiquitination of AMOTL2 at 'Lys-337' and 'Lys-404' which prohibits its interaction with and activation of LATS2. Loss of LATS2 activation and subsequent loss of YAP1 phosphorylation results in an increase in YAP1-driven transcription of target genes. This Mus musculus (Mouse) protein is Ubiquitin carboxyl-terminal hydrolase 9X.